Here is a 31-residue protein sequence, read N- to C-terminus: Relaxin B chain (31 aa).

Q1 bears the Pyrrolidone carboxylic acid mark.

It belongs to the insulin family. Heterodimer of a B chain and an A chain linked by two disulfide bonds.

Its subcellular location is the secreted. Relaxin is an ovarian hormone that acts with estrogen to produce dilatation of the birth canal in many mammals. The chain is Relaxin B chain from Phocoenoides dalli dalli (Dall's porpoise).